The chain runs to 356 residues: Dual-specificity RNA methyltransferase RlmN (356 aa).

Glutamate 87 functions as the Proton acceptor in the catalytic mechanism. The Radical SAM core domain occupies 106–339; that stretch reads QEAKYTICVS…CTIRDSKGID (234 aa). Cysteine 113 and cysteine 344 are disulfide-bonded. Cysteine 120, cysteine 124, and cysteine 127 together coordinate [4Fe-4S] cluster. S-adenosyl-L-methionine contacts are provided by residues 170–171, serine 202, 225–227, and asparagine 301; these read GE and SLH. Cysteine 344 functions as the S-methylcysteine intermediate in the catalytic mechanism.

Belongs to the radical SAM superfamily. RlmN family. The cofactor is [4Fe-4S] cluster.

Its subcellular location is the cytoplasm. It carries out the reaction adenosine(2503) in 23S rRNA + 2 reduced [2Fe-2S]-[ferredoxin] + 2 S-adenosyl-L-methionine = 2-methyladenosine(2503) in 23S rRNA + 5'-deoxyadenosine + L-methionine + 2 oxidized [2Fe-2S]-[ferredoxin] + S-adenosyl-L-homocysteine. It catalyses the reaction adenosine(37) in tRNA + 2 reduced [2Fe-2S]-[ferredoxin] + 2 S-adenosyl-L-methionine = 2-methyladenosine(37) in tRNA + 5'-deoxyadenosine + L-methionine + 2 oxidized [2Fe-2S]-[ferredoxin] + S-adenosyl-L-homocysteine. Its function is as follows. Specifically methylates position 2 of adenine 2503 in 23S rRNA and position 2 of adenine 37 in tRNAs. m2A2503 modification seems to play a crucial role in the proofreading step occurring at the peptidyl transferase center and thus would serve to optimize ribosomal fidelity. In Sulfurimonas denitrificans (strain ATCC 33889 / DSM 1251) (Thiomicrospira denitrificans (strain ATCC 33889 / DSM 1251)), this protein is Dual-specificity RNA methyltransferase RlmN.